Here is a 994-residue protein sequence, read N- to C-terminus: MERSQSQQHGGEQSWWGTAPQYQYMPFEHCTSYGLPSENGGLQHRPRKDLGPRHNAHPTQIYGHHKEQYSYQAQDRGIPKKTDSSSTVDSLDEDHYSKCQDCVHRLGRVLRRKLGEDWIFLVLLGLLMALVSWCMDYVSAKSLQAYKWTYAQMQPSLPLQYLAWVTFPLILILFSALFCQLISPQAVGSGIPEMKTILRGVVLKEYLTLKAFVAKVVALTAGLGSGIPVGKEGPFVHIASICAAVLSKFMSMFSGVYEQPYYYTDILTVGCAVGVGCCFGTPLGGVLFSIEVTSTYFAVRNYWRGFFAATFSAFVFRVLAVWNKDAVTITALFRTNFRMDFPFDLKELPAFAVIGICCGFLGAVFVYLHRQVMLGVRKHKALSQFLAKHRLLYPGIVTFVIASLTFPPGMGQFMAGELMPREAISTLFDNNTWVKHIGDPKSLGQSAVWIHPQVNVVIIILLFFVMKFWMSIVATTMPIPCGGFMPVFVLGAAFGRLVGEIMAMLFPEGILFDDIIYKILPGGYAVIGAAALTGAVSHTVSTAVICFELTGQIAHILPMMVAVILANMVAQSLQPSLYDSIIQVKKLPYLPDLGWNQLSKFTIFVEDIMVRDVKFVSASCTYGELRNLLQTTTVKTLPLVDSKDSMILLGSVERSELQSLLQRHLCAERRLKAAQDMARKLSELPYNGQAQLAGEWHPGGRPESFAFVDEDEDEDVSRKTELPQTPTPPPPPPPPLPPQFPIAPSYPEEPNGPLPSHKQPPEASDSADQRSSIFQRLLHCLLGKAHSTKKKITQDSTDLVDNMSPEEIEAWEREQLSQPVCFDFCCIDQSPFQLVEQTTLHKTHTLFSLLGLHLAYVTSMGKLRGVLALEELQKAIKGHTKSGVQLRPPLASFRNTTSIRKTPGGPPPPAESWNVPEGEDGAPEREVMVPTMPETPVPPPSPEVPSCLAPARVEGELEELEMVGNLGPEEDLADILHGPSLRSTDEEDEDELIL.

Residues 1 to 118 are Cytoplasmic-facing; sequence MERSQSQQHG…VLRRKLGEDW (118 aa). The tract at residues 37–61 is disordered; that stretch reads SENGGLQHRPRKDLGPRHNAHPTQI. A helical membrane pass occupies residues 119–150; it reads IFLVLLGLLMALVSWCMDYVSAKSLQAYKWTY. Topologically, residues 151 to 158 are extracellular; the sequence is AQMQPSLP. Residues 159–179 form a helical membrane-spanning segment; it reads LQYLAWVTFPLILILFSALFC. At 180–183 the chain is on the cytoplasmic side; the sequence is QLIS. Residues 184–189 constitute an intramembrane region (note=Loop between two helices); it reads PQAVGS. The Selectivity filter part_1 signature appears at 188–192; it reads GSGIP. Ser-189 is a chloride binding site. An intramembrane region (helical) is located at residues 190–195; sequence GIPEMK. The Cytoplasmic portion of the chain corresponds to 196–208; sequence TILRGVVLKEYLT. The helical intramembrane region spans 209–224; the sequence is LKAFVAKVVALTAGLG. Positions 225 to 230 form an intramembrane region, note=Loop between two helices; the sequence is SGIPVG. The Selectivity filter part_2 signature appears at 230-234; it reads GKEGP. Residues 231–246 constitute an intramembrane region (helical); that stretch reads KEGPFVHIASICAAVL. Topologically, residues 247–268 are cytoplasmic; that stretch reads SKFMSMFSGVYEQPYYYTDILT. Intramembrane regions (helical) lie at residues 269-280 and 281-290; these read VGCAVGVGCCFG and TPLGGVLFSI. The Cytoplasmic segment spans residues 291 to 301; it reads EVTSTYFAVRN. The chain crosses the membrane as a helical span at residues 302–321; that stretch reads YWRGFFAATFSAFVFRVLAV. Residues 322–347 are Extracellular-facing; sequence WNKDAVTITALFRTNFRMDFPFDLKE. A helical transmembrane segment spans residues 348–376; the sequence is LPAFAVIGICCGFLGAVFVYLHRQVMLGV. Topologically, residues 377–390 are cytoplasmic; it reads RKHKALSQFLAKHR. The chain crosses the membrane as a helical span at residues 391–408; the sequence is LLYPGIVTFVIASLTFPP. Topologically, residues 409-414 are extracellular; it reads GMGQFM. Positions 415-418 form an intramembrane region, note=Loop between two helices; sequence AGEL. Residues 419 to 426 constitute an intramembrane region (helical); that stretch reads MPREAIST. The Extracellular segment spans residues 427–457; sequence LFDNNTWVKHIGDPKSLGQSAVWIHPQVNVV. Positions 458–475 form an intramembrane region, helical; sequence IIILLFFVMKFWMSIVAT. Positions 476–482 form an intramembrane region, note=Loop between two helices; the sequence is TMPIPCG. Residues 482–486 carry the Selectivity filter part_3 motif; sequence GGFMP. Residues 483-498 constitute an intramembrane region (helical); that stretch reads GFMPVFVLGAAFGRLV. Phe-484 is a binding site for chloride. At 499–521 the chain is on the extracellular side; it reads GEIMAMLFPEGILFDDIIYKILP. The helical intramembrane region spans 522–538; sequence GGYAVIGAAALTGAVSH. The segment at residues 539-540 is an intramembrane region (note=Loop between two helices); sequence TV. Residues 541–554 constitute an intramembrane region (helical); the sequence is STAVICFELTGQIA. Topologically, residues 555–557 are extracellular; the sequence is HIL. An intramembrane region (helical) is located at residues 558–571; sequence PMMVAVILANMVAQ. The segment at residues 572–575 is an intramembrane region (note=Loop between two helices); it reads SLQP. Residues 576-578 constitute an intramembrane region (helical); it reads SLY. Tyr-578 contacts chloride. The Cytoplasmic segment spans residues 579–994; that stretch reads DSIIQVKKLP…DEEDEDELIL (416 aa). In terms of domain architecture, CBS 1 spans 609-668; it reads MVRDVKFVSASCTYGELRNLLQTTTVKTLPLVDSKDSMILLGSVERSELQSLLQRHLCAE. 3 disordered regions span residues 710-769, 880-923, and 965-994; these read EDED…SADQ, TKSG…DGAP, and NLGP…ELIL. A compositionally biased stretch (pro residues) spans 725 to 741; that stretch reads TPTPPPPPPPPLPPQFP. The 56-residue stretch at 827–882 folds into the CBS 2 domain; it reads IDQSPFQLVEQTTLHKTHTLFSLLGLHLAYVTSMGKLRGVLALEELQKAIKGHTKS. The residue at position 892 (Ser-892) is a Phosphoserine. Over residues 985 to 994 the composition is skewed to acidic residues; that stretch reads DEEDEDELIL.

It belongs to the chloride channel (TC 2.A.49) family. ClC-1/CLCN1 subfamily. In terms of assembly, homodimer. As to expression, predominantly expressed in skeletal muscles.

The protein localises to the cell membrane. Its subcellular location is the sarcolemma. It localises to the T-tubule. It carries out the reaction chloride(in) = chloride(out). It catalyses the reaction bromide(in) = bromide(out). The enzyme catalyses iodide(out) = iodide(in). The catalysed reaction is thiocyanate(in) = thiocyanate(out). It carries out the reaction nitrate(in) = nitrate(out). Modulated by membrane voltage with depolarization favouring channel opening and hyperpolarization favouring channel closure. Inhibited by acidic pH and ATP binding due to a shift of voltage dependence of common gating to more positive voltages. Inhibited by 9-anthracene-carboxylic acid. Its function is as follows. Voltage-gated chloride channel involved in skeletal muscle excitability. Generates most of the plasma membrane chloride conductance in skeletal muscle fibers, stabilizes the resting membrane potential and contributes to the repolarization phase during action potential firing. Forms a homodimeric channel where each subunit has its own ion conduction pathway. Conducts double-barreled currents controlled by two types of gates, two fast glutamate gates that control each subunit independently and a slow common gate that opens and shuts off both subunits simultaneously. Has a significant open probability at muscle resting potential and is further activated upon membrane depolarization. Permeable to small monovalent anions with ion selectivity for chloride &gt; thiocyanate &gt; bromide &gt; nitrate &gt; iodide. The protein is Chloride channel protein 1 (Clcn1) of Rattus norvegicus (Rat).